A 268-amino-acid chain; its full sequence is MNQMNPAFVMPDVQSTVDTRQIPIQRVGVKAVRHPLTVRTPDGSAQPTVGTWNLDVHLPAEVKGTHMSRFVALLEENKAPLDSSAFRALLTSMLEKLEAPAGRIEVSFPYFVNKTAPVSGVQSLLDYEVSLMGDSRDGATRLFLKVLVPVTSLCPCSKKISQYGAHNQRSHVTINAELIDDVPVEDLIRIAEEEASCELWGLLKRPDEKFVTERAYENPKFVEDLVRDVAQRLNDDHRIVAYVLEAENFESIHNHSAYAVIESDKRLR.

Belongs to the GTP cyclohydrolase IV family.

It carries out the reaction GTP + H2O = 7,8-dihydroneopterin 3'-triphosphate + formate + H(+). It participates in cofactor biosynthesis; 7,8-dihydroneopterin triphosphate biosynthesis; 7,8-dihydroneopterin triphosphate from GTP: step 1/1. In terms of biological role, converts GTP to 7,8-dihydroneopterin triphosphate. The sequence is that of GTP cyclohydrolase FolE2 from Paraburkholderia phymatum (strain DSM 17167 / CIP 108236 / LMG 21445 / STM815) (Burkholderia phymatum).